The sequence spans 1010 residues: Trifunctional purine biosynthetic protein adenosine-3 (1010 aa).

A2 bears the N-acetylalanine mark. Residues 111–318 (KEFMDRHGIS…LYEVIQSILD (208 aa)) form the ATP-grasp domain. Residues 190-193 (EELL), E197, R220, and N229 each bind ATP. Residues E288 and N290 each coordinate Mg(2+). K350 bears the N6-acetyllysine mark. Residues 434 to 809 (GLTYKESGVD…HFSVQPKKAR (376 aa)) form an AIRS domain region. S440 is modified (phosphoserine). At T682 the chain carries Phosphothreonine. S802 is subject to Phosphoserine. Positions 810–1010 (VAVLISGTGS…NGRICWVTED (201 aa)) are GART domain. 818 to 820 (GSN) contacts N(1)-(5-phospho-beta-D-ribosyl)glycinamide. (6R)-10-formyltetrahydrofolate contacts are provided by residues R871, 896-899 (MRIL), and N913. The active-site Proton donor is the H915. 947 to 951 (AEDVD) is a binding site for (6R)-10-formyltetrahydrofolate. A N(1)-(5-phospho-beta-D-ribosyl)glycinamide-binding site is contributed by 977 to 980 (KLAE).

It in the N-terminal section; belongs to the GARS family. In the central section; belongs to the AIR synthase family. The protein in the C-terminal section; belongs to the GART family. As to quaternary structure, homodimer. Mg(2+) serves as cofactor. It depends on Mn(2+) as a cofactor.

The enzyme catalyses 5-phospho-beta-D-ribosylamine + glycine + ATP = N(1)-(5-phospho-beta-D-ribosyl)glycinamide + ADP + phosphate + H(+). It carries out the reaction 2-formamido-N(1)-(5-O-phospho-beta-D-ribosyl)acetamidine + ATP = 5-amino-1-(5-phospho-beta-D-ribosyl)imidazole + ADP + phosphate + H(+). It catalyses the reaction N(1)-(5-phospho-beta-D-ribosyl)glycinamide + (6R)-10-formyltetrahydrofolate = N(2)-formyl-N(1)-(5-phospho-beta-D-ribosyl)glycinamide + (6S)-5,6,7,8-tetrahydrofolate + H(+). It functions in the pathway purine metabolism; IMP biosynthesis via de novo pathway; 5-amino-1-(5-phospho-D-ribosyl)imidazole from N(2)-formyl-N(1)-(5-phospho-D-ribosyl)glycinamide: step 2/2. The protein operates within purine metabolism; IMP biosynthesis via de novo pathway; N(1)-(5-phospho-D-ribosyl)glycinamide from 5-phospho-alpha-D-ribose 1-diphosphate: step 2/2. It participates in purine metabolism; IMP biosynthesis via de novo pathway; N(2)-formyl-N(1)-(5-phospho-D-ribosyl)glycinamide from N(1)-(5-phospho-D-ribosyl)glycinamide (10-formyl THF route): step 1/1. Its function is as follows. Trifunctional enzyme that catalyzes three distinct reactions as part of the 'de novo' inosine monophosphate biosynthetic pathway. The protein is Trifunctional purine biosynthetic protein adenosine-3 (GART) of Bos taurus (Bovine).